The chain runs to 198 residues: Protein GrpE (198 aa).

It belongs to the GrpE family. As to quaternary structure, homodimer.

The protein resides in the cytoplasm. In terms of biological role, participates actively in the response to hyperosmotic and heat shock by preventing the aggregation of stress-denatured proteins, in association with DnaK and GrpE. It is the nucleotide exchange factor for DnaK and may function as a thermosensor. Unfolded proteins bind initially to DnaJ; upon interaction with the DnaJ-bound protein, DnaK hydrolyzes its bound ATP, resulting in the formation of a stable complex. GrpE releases ADP from DnaK; ATP binding to DnaK triggers the release of the substrate protein, thus completing the reaction cycle. Several rounds of ATP-dependent interactions between DnaJ, DnaK and GrpE are required for fully efficient folding. The sequence is that of Protein GrpE from Actinobacillus pleuropneumoniae serotype 7 (strain AP76).